The chain runs to 162 residues: Caveolin-2 (162 aa).

Residues Met-1–Lys-86 are Cytoplasmic-facing. Tyr-19 is subject to Phosphotyrosine; by SRC. A phosphoserine mark is found at Ser-20 and Ser-23. A Phosphotyrosine; by SRC modification is found at Tyr-27. The helical intramembrane region spans Phe-87 to Leu-107. The Cytoplasmic portion of the chain corresponds to Ser-108–Asp-162.

Belongs to the caveolin family. In terms of assembly, monomer or homodimer. Interacts with CAV1; the interaction forms a stable heterooligomeric complex that is required for targeting to lipid rafts and for caveolae formation. Tyrosine phosphorylated forms do not form heterooligomers with the Tyr-19-phosphorylated form existing as a monomer or dimer, and the Tyr-27-form as a monomer only. Interacts (tyrosine phosphorylated form) with the SH2 domain-containing proteins, RASA1, NCK1 and SRC. Interacts (tyrosine phosphorylated form) with INSR, the interaction (Tyr-27-phosphorylated form) is increased on insulin stimulation. Interacts (Tyr-19 phosphorylated form) with MAPK1 (phosphorylated form); the interaction, promoted by insulin, leads to nuclear location and MAPK1 activation. Interacts with STAT3; the interaction is increased on insulin-induced tyrosine phosphorylation leading to STAT activation. Post-translationally, phosphorylated on serine and tyrosine residues. CAV1 promotes phosphorylation on Ser-23 which then targets the complex to the plasma membrane, lipid rafts and caveolae. Phosphorylation on both Tyr-19 and Tyr-27 is required for insulin-induced 'Ser-727' phosphorylation of STAT3 and its activation. Phosphorylation on Tyr-19 is required for insulin-induced phosphorylation of MAPK1 and DNA binding of STAT3. Tyrosine phosphorylation is induced by both EGF and insulin.

The protein localises to the nucleus. It is found in the cytoplasm. Its subcellular location is the golgi apparatus membrane. The protein resides in the cell membrane. It localises to the membrane. The protein localises to the caveola. May act as a scaffolding protein within caveolar membranes. Interacts directly with G-protein alpha subunits and can functionally regulate their activity. Acts as an accessory protein in conjunction with CAV1 in targeting to lipid rafts and driving caveolae formation. Positive regulator of cellular mitogenesis of the MAPK signaling pathway. Required for the insulin-stimulated nuclear translocation and activation of MAPK1 and STAT3, and the subsequent regulation of cell cycle progression. This is Caveolin-2 (CAV2) from Muntiacus muntjak (Barking deer).